A 390-amino-acid chain; its full sequence is Na(+)/H(+) antiporter NhaA 1 (390 aa).

11 consecutive transmembrane segments (helical) span residues 14 to 34 (SGIL…NGVL), 59 to 79 (TILW…GLEL), 94 to 114 (VALP…IFYV), 125 to 145 (GWAI…FLLG), 154 to 174 (LFLL…IAIF), 179 to 199 (LSII…ILNY), 205 to 225 (IYIY…SGIH), 260 to 280 (PIVA…VVFS), 295 to 315 (IIFG…FLAI), 328 to 348 (WLHL…SLFI), and 362 to 382 (ANKI…YFVL).

It belongs to the NhaA Na(+)/H(+) (TC 2.A.33) antiporter family.

The protein localises to the cell inner membrane. It catalyses the reaction Na(+)(in) + 2 H(+)(out) = Na(+)(out) + 2 H(+)(in). Its function is as follows. Na(+)/H(+) antiporter that extrudes sodium in exchange for external protons. In Campylobacter fetus subsp. fetus (strain 82-40), this protein is Na(+)/H(+) antiporter NhaA 1.